A 295-amino-acid chain; its full sequence is bZIP transcription factor 60 (295 aa).

Residues 101 to 154 (PAAADDSGKENSDLVVEKKSNDSGSEIHDDDDEEGDDDAVAKKRRRRVRNRDAA) form a disordered region. Positions 106–127 (DSGKENSDLVVEKKSNDSGSEI) are enriched in basic and acidic residues. Positions 128-138 (HDDDDEEGDDD) are enriched in acidic residues. The region spanning 140 to 203 (VAKKRRRRVR…QSLRYCLQKG (64 aa)) is the bZIP domain. Residues 142-162 (KKRRRRVRNRDAAVRSRERKK) form a basic motif region. Residues 168–182 (LEKKSKYLERECLRL) are leucine-zipper. A helical membrane pass occupies residues 224 to 244 (LLLGSLLWLLGVNFICLFPYM).

The protein belongs to the bZIP family. In terms of assembly, interacts with BZIP28. As to expression, expressed in seedlings, rosette and cauline leaves, stems, buds, flowers, siliques, immature seeds, anthers and pollen grains.

The protein localises to the endoplasmic reticulum membrane. It is found in the nucleus. Functionally, transcription factor involved in the unfolded protein response (UPR). Acts during endoplasmic reticulum stress (ER) by activating unfolded protein response (UPR) target genes via direct binding to the UPR element (UPRE). Plays a role in plant immunity and abiotic stress responses. In Arabidopsis thaliana (Mouse-ear cress), this protein is bZIP transcription factor 60.